The primary structure comprises 1016 residues: UvrABC system protein A (1016 aa).

Position 32-39 (32-39) interacts with ATP; sequence GVSGSGKS. The C4-type zinc finger occupies 259–286; it reads CPEHGSVLEELEPRSFSFNSPYGACGDC. 2 consecutive ABC transporter domains span residues 315 to 627 and 647 to 975; these read WTKK…KNSL and GNGK…EYLR. 679–686 contacts ATP; the sequence is GPSGSGKS. The segment at 778-804 adopts a C4-type zinc-finger fold; sequence CEHCKGDGVMKIEMNFLPDIYVPCEVC. The interval 984 to 1016 is disordered; that stretch reads EPRARGEKAEKPAKAKAPAKKRTKKQTELVEAD. Basic and acidic residues predominate over residues 985–996; it reads PRARGEKAEKPA.

The protein belongs to the ABC transporter superfamily. UvrA family. Forms a heterotetramer with UvrB during the search for lesions.

Its subcellular location is the cytoplasm. Its function is as follows. The UvrABC repair system catalyzes the recognition and processing of DNA lesions. UvrA is an ATPase and a DNA-binding protein. A damage recognition complex composed of 2 UvrA and 2 UvrB subunits scans DNA for abnormalities. When the presence of a lesion has been verified by UvrB, the UvrA molecules dissociate. This Deinococcus radiodurans (strain ATCC 13939 / DSM 20539 / JCM 16871 / CCUG 27074 / LMG 4051 / NBRC 15346 / NCIMB 9279 / VKM B-1422 / R1) protein is UvrABC system protein A.